Here is a 90-residue protein sequence, read N- to C-terminus: C-C motif chemokine 4 homolog (90 aa).

A signal peptide spans 1 to 21; that stretch reads MKVSVAALAVLLIAICYQTSA. 2 disulfide bridges follow: Cys-32-Cys-56 and Cys-33-Cys-72.

This sequence belongs to the intercrine beta (chemokine CC) family. As to quaternary structure, homodimer.

It localises to the secreted. In terms of biological role, monokine with inflammatory and chemokinetic properties. In Gallus gallus (Chicken), this protein is C-C motif chemokine 4 homolog (CCL4).